A 348-amino-acid chain; its full sequence is Ileal sodium/bile acid cotransporter (348 aa).

Residues 1 to 28 (MNDPNSCVDNATVCSGASCVVPESNFNN) are Extracellular-facing. A glycan (N-linked (GlcNAc...) asparagine) is linked at Asn10. Residues 29-49 (ILSVVLSTVLTILLALVMFSM) form a helical membrane-spanning segment. At 50–82 (GCNVEIKKFLGHIKRPWGICVGFLCQFGIMPLT) the chain is on the cytoplasmic side. Residues 83 to 103 (GFILSVAFDILPLQAVVVLII) traverse the membrane as a helical segment. Residues 104-126 (GCCPGGTASNILAYWVDGDMDLS) lie on the Extracellular side of the membrane. Residues 127–147 (VSMTTCSTLLALGMMPLCLLI) traverse the membrane as a helical segment. At 148–157 (YTKMWVDSGS) the chain is on the cytoplasmic side. Residues 158-178 (IVIPYDNIGTSLVSLVVPVSI) traverse the membrane as a helical segment. Topologically, residues 179 to 195 (GMFVNHKWPQKAKIILK) are extracellular. The chain crosses the membrane as a helical span at residues 196 to 216 (IGSIAGAILIVLIAVVGGILY). Residues 217 to 224 (QSAWIIAP) are Cytoplasmic-facing. The helical transmembrane segment at 225 to 245 (KLWIIGTIFPVAGYSLGFLLA) threads the bilayer. Residues 246–284 (RIAGLPWYRCRTVAFETGMQNTQLCSTIVQLSFTPEELN) are Extracellular-facing. The chain crosses the membrane as a helical span at residues 285-305 (VVFTFPLIYSIFQLAFAAIFL). At 306-348 (GFYVAYKKCHGKNKAEIPESKENGTEPESSFYKANGGFQPDEK) the chain is on the cytoplasmic side. Positions 320–329 (AEIPESKENG) are enriched in basic and acidic residues. A disordered region spans residues 320–348 (AEIPESKENGTEPESSFYKANGGFQPDEK). A Phosphoserine modification is found at Ser335.

The protein belongs to the bile acid:sodium symporter (BASS) (TC 2.A.28) family. In terms of assembly, monomer and homodimer. In terms of tissue distribution, mainly expressed in ileum and kidney, lower expression in cecum.

It is found in the membrane. The enzyme catalyses taurocholate(out) + 2 Na(+)(out) = taurocholate(in) + 2 Na(+)(in). It carries out the reaction cholate(out) + 2 Na(+)(out) = cholate(in) + 2 Na(+)(in). It catalyses the reaction taurochenodeoxycholate(out) + 2 Na(+)(out) = taurochenodeoxycholate(in) + 2 Na(+)(in). The catalysed reaction is tauroursodeoxycholate(out) + 2 Na(+)(out) = tauroursodeoxycholate(in) + 2 Na(+)(in). The enzyme catalyses glycocholate(out) + 2 Na(+)(out) = glycocholate(in) + 2 Na(+)(in). It carries out the reaction tauronorcholate(out) + 2 Na(+)(out) = tauronorcholate(in) + 2 Na(+)(in). It catalyses the reaction tauroallocholate(out) + 2 Na(+)(out) = tauroallocholate(in) + 2 Na(+)(in). The catalysed reaction is taurodeoxycholate(out) + 2 Na(+)(out) = taurodeoxycholate(in) + 2 Na(+)(in). The enzyme catalyses tauro-beta-muricholate(out) + 2 Na(+)(out) = tauro-beta-muricholate(in) + 2 Na(+)(in). In terms of biological role, plays a critical role in the sodium-dependent reabsorption of bile acids from the lumen of the small intestine. Transports various bile acids, unconjugated or conjugated, such as cholate and taurocholate. Also responsible for bile acid transport in the renal proximal tubules, a salvage mechanism that helps conserve bile acids. Works collaboratively with the Na(+)-taurocholate cotransporting polypeptide (NTCP), the organic solute transporter (OST), and the bile salt export pump (BSEP), to ensure efficacious biological recycling of bile acids during enterohepatic circulation. This Homo sapiens (Human) protein is Ileal sodium/bile acid cotransporter (SLC10A2).